Reading from the N-terminus, the 129-residue chain is Glycine cleavage system H protein (129 aa).

The Lipoyl-binding domain occupies 24–106 (SYTVGITEHA…FGDGWFFRVM (83 aa)). At Lys-65 the chain carries N6-lipoyllysine.

Belongs to the GcvH family. In terms of assembly, the glycine cleavage system is composed of four proteins: P, T, L and H. It depends on (R)-lipoate as a cofactor.

Functionally, the glycine cleavage system catalyzes the degradation of glycine. The H protein shuttles the methylamine group of glycine from the P protein to the T protein. This is Glycine cleavage system H protein from Shewanella frigidimarina (strain NCIMB 400).